The chain runs to 728 residues: Phomopsene synthase (728 aa).

The terpene cyclase stretch occupies residues 1–327; the sequence is MEYRYSYVID…PRYHSDQSLD (327 aa). Residues aspartate 94 and aspartate 98 each coordinate Mg(2+). Substrate is bound by residues aspartate 94, aspartate 98, 181-184, asparagine 226, 230-234, and 319-320; these read RIVD, SWEKE, and RY. Positions 94 to 98 match the DDXXD 1 motif; sequence DDLVD. Residues 226–234 carry the NSE/DTE motif; that stretch reads NDVQSWEKE. Residues 328–728 are prenyltransferase; it reads EMMVARMKYG…FRFLLSLLKV (401 aa). Basic and acidic residues predominate over residues 352 to 363; sequence ENRGTKRTHQDD. The tract at residues 352 to 379 is disordered; it reads ENRGTKRTHQDDTEGVQSVKRFNGASTK. Tandem repeats lie at residues 381 to 386, 387 to 392, and 393 to 398. Positions 381 to 398 are 3 X 6 AA approximate tandem repeats; that stretch reads GINGTNGINGLNGINGSN. Isopentenyl diphosphate-binding residues include lysine 447, arginine 450, and histidine 479. Residues aspartate 486 and aspartate 490 each coordinate Mg(2+). A DDXXD 2 motif is present at residues 486 to 490; the sequence is DDVQD. Arginine 495 provides a ligand contact to dimethylallyl diphosphate. Arginine 496 provides a ligand contact to isopentenyl diphosphate. Dimethylallyl diphosphate is bound by residues lysine 574, threonine 575, glutamine 610, asparagine 617, lysine 627, and lysine 637.

In the N-terminal section; belongs to the terpene synthase family. This sequence in the C-terminal section; belongs to the FPP/GGPP synthase family. In terms of assembly, hexamer. Mg(2+) is required as a cofactor.

The catalysed reaction is isopentenyl diphosphate + (2E,6E)-farnesyl diphosphate = (2E,6E,10E)-geranylgeranyl diphosphate + diphosphate. It functions in the pathway secondary metabolite biosynthesis; terpenoid biosynthesis. Bifunctional terpene synthase; part of the gene cluster that mediates the biosynthesis of the diterpene methyl phomopsenonate. At first, the universal precursor of diterpene, geranylgeranyl diphosphate (GGPP) is provided and is cyclized by the unusual bifunctional terpene synthase PaPS to give phomopsene. The C-terminal prenyltransferase domain of PaPS catalyzes formation of GGPP, whereas the N-terminal terpene cyclase domain catalyzes the cyclization of GGPP to phomopsene. Since the oxidation of a methylgroup to a carboxyl group is frequently catalyzed by a cytochrome P450 monooxygenase, the C-16 methyl group would be oxidized by the cluster-specific cytochrome P450 monooxygenase ORF3. Subsequently, oxidation of the allylic position and methylation of the carboxyl group may give methyl phomopsenonate. Although further study is necessary to identify genes such as a monooxygenase and a methyltransferase, the predicted functions of genes on the cluster are correlated with the structure of methyl phomopsenonate. The polypeptide is Phomopsene synthase (Phomopsis amygdali (Fusicoccum amygdali)).